A 493-amino-acid chain; its full sequence is Anthranilate synthase component 1 (493 aa).

L-tryptophan contacts are provided by residues Ser-48 and 273-275 (PYM). 308–309 (GT) lines the chorismate pocket. A Mg(2+)-binding site is contributed by Glu-335. Chorismate contacts are provided by residues Tyr-423, Arg-443, 457–459 (GGG), and Gly-459. Glu-472 lines the Mg(2+) pocket.

It belongs to the anthranilate synthase component I family. Heterotetramer consisting of two non-identical subunits: a beta subunit (TrpG) and a large alpha subunit (TrpE). Mg(2+) is required as a cofactor.

The enzyme catalyses chorismate + L-glutamine = anthranilate + pyruvate + L-glutamate + H(+). Its pathway is amino-acid biosynthesis; L-tryptophan biosynthesis; L-tryptophan from chorismate: step 1/5. Feedback inhibited by tryptophan. Functionally, part of a heterotetrameric complex that catalyzes the two-step biosynthesis of anthranilate, an intermediate in the biosynthesis of L-tryptophan. In the first step, the glutamine-binding beta subunit (TrpG) of anthranilate synthase (AS) provides the glutamine amidotransferase activity which generates ammonia as a substrate that, along with chorismate, is used in the second step, catalyzed by the large alpha subunit of AS (TrpE) to produce anthranilate. In the absence of TrpG, TrpE can synthesize anthranilate directly from chorismate and high concentrations of ammonia. The chain is Anthranilate synthase component 1 (trpE) from Pseudomonas putida (Arthrobacter siderocapsulatus).